Reading from the N-terminus, the 544-residue chain is Chaperonin GroEL (544 aa).

ATP contacts are provided by residues 30 to 33 (TLGP), K51, 87 to 91 (DGTTT), G415, 479 to 481 (NAA), and D495.

It belongs to the chaperonin (HSP60) family. In terms of assembly, forms a cylinder of 14 subunits composed of two heptameric rings stacked back-to-back. Interacts with the co-chaperonin GroES.

The protein localises to the cytoplasm. The enzyme catalyses ATP + H2O + a folded polypeptide = ADP + phosphate + an unfolded polypeptide.. Functionally, together with its co-chaperonin GroES, plays an essential role in assisting protein folding. The GroEL-GroES system forms a nano-cage that allows encapsulation of the non-native substrate proteins and provides a physical environment optimized to promote and accelerate protein folding. This Acinetobacter baumannii (strain AB307-0294) protein is Chaperonin GroEL.